The chain runs to 1074 residues: Probable arabinosyltransferase C (1074 aa).

Helical transmembrane passes span 15-37 (ARLV…PLLP), 214-236 (LLKL…ALHV), 251-273 (SRWW…WHFV), 415-437 (IIIG…ALLV), 452-474 (RFGY…FLIF), 516-538 (SVAR…AMTL), 573-595 (THQF…VAVT), 608-630 (FGAA…WYVS), 645-667 (FGFT…WFHF), and 684-706 (LLVA…SLTL).

Belongs to the emb family.

It localises to the cell membrane. In terms of biological role, arabinosyl transferase responsible for the polymerization of arabinose into the arabinan of arabinogalactan. The protein is Probable arabinosyltransferase C (embC) of Mycolicibacterium smegmatis (Mycobacterium smegmatis).